The chain runs to 185 residues: MLKAKILFVGPCESGKTVLANFLTESSDITEYNPTQGVRILEFENPHVTSNNKGTGCEFELWDCGGDSKFESCWPALMKDAHGVVIVFNADIPSHLKEIEMWYSCFVQQQFLQDSHCMLVAHHKPGSGGERGSLALSPPLNKLKLVHSNLEEDPEEVRVEFIKYLKSIINSMSESRDREEMLIIT.

GTP contacts are provided by residues G10–T17, D63–D67, and H123–G126. S137 is modified (phosphoserine).

The protein belongs to the small GTPase superfamily. Rab family. As to quaternary structure, component of the IFT complex B, at least composed of IFT20, IFT22, IFT25, IFT27, IFT46, IFT52, TRAF3IP1/IFT54, IFT57, IFT74, IFT80, IFT81, and IFT88. Interacts with IFT88. Interacts with CFAP61.

It is found in the cell projection. The protein resides in the cilium. Small GTPase-like component of the intraflagellar transport (IFT) complex B. In Mus musculus (Mouse), this protein is Intraflagellar transport protein 22 homolog (Ift22).